Consider the following 215-residue polypeptide: 7-methyl-GTP pyrophosphatase (215 aa).

Asp-79 acts as the Proton acceptor in catalysis.

Belongs to the Maf family. YceF subfamily. It depends on a divalent metal cation as a cofactor.

The protein localises to the cytoplasm. The catalysed reaction is N(7)-methyl-GTP + H2O = N(7)-methyl-GMP + diphosphate + H(+). Nucleoside triphosphate pyrophosphatase that hydrolyzes 7-methyl-GTP (m(7)GTP). May have a dual role in cell division arrest and in preventing the incorporation of modified nucleotides into cellular nucleic acids. The protein is 7-methyl-GTP pyrophosphatase of Burkholderia thailandensis (strain ATCC 700388 / DSM 13276 / CCUG 48851 / CIP 106301 / E264).